The chain runs to 985 residues: Alanine--tRNA ligase, mitochondrial (985 aa).

A mitochondrion-targeting transit peptide spans 1–23; it reads MAASVAAAAGRLRRAIGRSCPWQ. ATP contacts are provided by residues Arg105, His123, Trp205, and 235–237; that span reads LWN. 2 residues coordinate L-alanine: Asn237 and Asp260. Gly264 contributes to the ATP binding site. 4 residues coordinate Zn(2+): His632, His636, Cys749, and His753.

Belongs to the class-II aminoacyl-tRNA synthetase family. Monomer. It depends on Zn(2+) as a cofactor.

Its subcellular location is the mitochondrion. The catalysed reaction is tRNA(Ala) + L-alanine + ATP = L-alanyl-tRNA(Ala) + AMP + diphosphate. It carries out the reaction (S)-lactate + ATP + H(+) = (S)-lactoyl-AMP + diphosphate. It catalyses the reaction (S)-lactoyl-AMP + L-lysyl-[protein] = N(6)-[(S)-lactoyl]-L-lysyl-[protein] + AMP + 2 H(+). Functionally, catalyzes the attachment of alanine to tRNA(Ala) in a two-step reaction: alanine is first activated by ATP to form Ala-AMP and then transferred to the acceptor end of tRNA(Ala). Also edits incorrectly charged tRNA(Ala) via its editing domain. In presence of high levels of lactate, also acts as a protein lactyltransferase that mediates lactylation of lysine residues in target proteins, such as CGAS. Acts as an inhibitor of cGAS/STING signaling by catalyzing lactylation of CGAS, preventing the formation of liquid-like droplets in which CGAS is activated. The polypeptide is Alanine--tRNA ligase, mitochondrial (Aars2) (Rattus norvegicus (Rat)).